The sequence spans 119 residues: Dihydroneopterin aldolase (119 aa).

Substrate is bound by residues Glu21, Tyr53, and 72–73 (IE). Lys99 serves as the catalytic Proton donor/acceptor.

The protein belongs to the DHNA family.

It catalyses the reaction 7,8-dihydroneopterin = 6-hydroxymethyl-7,8-dihydropterin + glycolaldehyde. It participates in cofactor biosynthesis; tetrahydrofolate biosynthesis; 2-amino-4-hydroxy-6-hydroxymethyl-7,8-dihydropteridine diphosphate from 7,8-dihydroneopterin triphosphate: step 3/4. Catalyzes the conversion of 7,8-dihydroneopterin to 6-hydroxymethyl-7,8-dihydropterin. The sequence is that of Dihydroneopterin aldolase (folB) from Streptococcus pyogenes serotype M1.